Here is a 609-residue protein sequence, read N- to C-terminus: Zinc metalloproteinase-disintegrin-like VMP-III (609 aa).

The signal sequence occupies residues 1–20; it reads MIQVLLVTICLAAFPYQGSS. The propeptide occupies 21 to 189; the sequence is IILESGNVND…KKASQLVVTA (169 aa). A Peptidase M12B domain is found at 198–393; it reads RFVELFLVVD…HNPECILNEP (196 aa). Glu201 and Asp285 together coordinate Ca(2+). Intrachain disulfides connect Cys308–Cys388, Cys348–Cys372, and Cys350–Cys355. A Zn(2+)-binding site is contributed by His333. Residue Glu334 is part of the active site. 2 residues coordinate Zn(2+): His337 and His343. Asn371 carries an N-linked (GlcNAc...) asparagine glycan. Positions 388, 391, 403, 406, 408, 410, 413, and 416 each coordinate Ca(2+). The 87-residue stretch at 401-487 folds into the Disintegrin domain; sequence PPVCGNELLE…ECPADVFHKN (87 aa). 14 cysteine pairs are disulfide-bonded: Cys404-Cys433, Cys415-Cys428, Cys417-Cys423, Cys427-Cys450, Cys441-Cys447, Cys446-Cys472, Cys459-Cys479, Cys466-Cys498, Cys491-Cys503, Cys510-Cys560, Cys525-Cys571, Cys538-Cys548, Cys555-Cys597, and Cys591-Cys602. Positions 465 to 467 match the D/ECD-tripeptide motif; it reads ECD. Ca(2+) contacts are provided by Asp467, Pro468, Glu470, Asp482, and Val483.

The protein belongs to the venom metalloproteinase (M12B) family. P-III subfamily. P-IIIa sub-subfamily. As to quaternary structure, monomer. Requires Zn(2+) as cofactor. Expressed by the venom gland.

The protein resides in the secreted. In terms of biological role, snake venom metalloproteinase that impairs hemostasis in the envenomed animal. The protein is Zinc metalloproteinase-disintegrin-like VMP-III of Crotalus viridis viridis (Prairie rattlesnake).